The sequence spans 223 residues: uncharacterized protein (223 aa).

Residues 5 to 116 (RILIVEDDVM…ELLLRMRNML (112 aa)) form the Response regulatory domain. A 4-aspartylphosphate modification is found at aspartate 52. The ompR/PhoB-type DNA-binding region spans 121-219 (GTFTQIKHLY…IYGEGYRLNT (99 aa)).

Post-translationally, phosphorylated by YbdK.

Its subcellular location is the cytoplasm. Its function is as follows. Member of the two-component regulatory system YbdK/YbdJ. This is an uncharacterized protein from Bacillus subtilis (strain 168).